We begin with the raw amino-acid sequence, 368 residues long: Mitogen-activated protein kinase 7 (368 aa).

Residues 32-319 (YVPIKPIGRG…VTDALLHPYM (288 aa)) form the Protein kinase domain. Residues 38–46 (IGRGAYGVV) and K61 contribute to the ATP site. The active-site Proton acceptor is the D158. T191 carries the phosphothreonine modification. Positions 191–193 (TEY) match the TXY motif. Y193 is modified (phosphotyrosine). At T196 the chain carries Phosphothreonine.

The protein belongs to the protein kinase superfamily. CMGC Ser/Thr protein kinase family. MAP kinase subfamily. As to quaternary structure, interacts with MKK3. It depends on Mg(2+) as a cofactor. Dually phosphorylated on Thr-191 and Tyr-193, which activates the enzyme.

The catalysed reaction is L-seryl-[protein] + ATP = O-phospho-L-seryl-[protein] + ADP + H(+). The enzyme catalyses L-threonyl-[protein] + ATP = O-phospho-L-threonyl-[protein] + ADP + H(+). Its activity is regulated as follows. Activated by threonine and tyrosine phosphorylation. Activated in response to hydrogen peroxide. Activation is triggered by MAPKKK17 and MAPKKK18 in a MKK3-dependent manner. Its function is as follows. MKK3-MPK7 module acts as a positive regulator of PR1 gene expression. The protein is Mitogen-activated protein kinase 7 (MPK7) of Arabidopsis thaliana (Mouse-ear cress).